A 304-amino-acid chain; its full sequence is GMP synthase [glutamine-hydrolyzing] subunit B (304 aa).

Residues 2–183 (VKVEKFIPNA…LDLPEEICER (182 aa)) form the GMPS ATP-PPase domain. An ATP-binding site is contributed by 28 to 34 (SGGVDSS).

Heterodimer composed of a glutamine amidotransferase subunit (A) and a GMP-binding subunit (B).

It carries out the reaction XMP + L-glutamine + ATP + H2O = GMP + L-glutamate + AMP + diphosphate + 2 H(+). The protein operates within purine metabolism; GMP biosynthesis; GMP from XMP (L-Gln route): step 1/1. In terms of biological role, catalyzes the synthesis of GMP from XMP. In Methanococcoides burtonii (strain DSM 6242 / NBRC 107633 / OCM 468 / ACE-M), this protein is GMP synthase [glutamine-hydrolyzing] subunit B.